We begin with the raw amino-acid sequence, 394 residues long: Putative F-box protein At5g66830 (394 aa).

Positions 17 to 63 (DWCWSKLPSDLMQFVFDRLGFADFQRAKSVCSSWLSVSRNSQPNNQI) constitute an F-box domain.

This Arabidopsis thaliana (Mouse-ear cress) protein is Putative F-box protein At5g66830.